The following is a 315-amino-acid chain: Ribose-phosphate pyrophosphokinase (315 aa).

Residues 37-39 (DGE) and 96-97 (RQ) contribute to the ATP site. Mg(2+) is bound by residues His-131 and Asp-170. Lys-194 is an active-site residue. D-ribose 5-phosphate is bound by residues Arg-196, Asp-220, and 224-228 (DTGGT).

This sequence belongs to the ribose-phosphate pyrophosphokinase family. Class I subfamily. In terms of assembly, homohexamer. It depends on Mg(2+) as a cofactor.

Its subcellular location is the cytoplasm. The enzyme catalyses D-ribose 5-phosphate + ATP = 5-phospho-alpha-D-ribose 1-diphosphate + AMP + H(+). Its pathway is metabolic intermediate biosynthesis; 5-phospho-alpha-D-ribose 1-diphosphate biosynthesis; 5-phospho-alpha-D-ribose 1-diphosphate from D-ribose 5-phosphate (route I): step 1/1. Involved in the biosynthesis of the central metabolite phospho-alpha-D-ribosyl-1-pyrophosphate (PRPP) via the transfer of pyrophosphoryl group from ATP to 1-hydroxyl of ribose-5-phosphate (Rib-5-P). The polypeptide is Ribose-phosphate pyrophosphokinase (Shewanella oneidensis (strain ATCC 700550 / JCM 31522 / CIP 106686 / LMG 19005 / NCIMB 14063 / MR-1)).